The sequence spans 895 residues: Structural polyprotein (895 aa).

This sequence belongs to the picornaviruses polyprotein family. Post-translationally, specific enzymatic cleavages in vivo yield mature proteins.

It localises to the virion. The protein resides in the host cytoplasm. Functionally, precursor of all the viral capsid proteins. In terms of biological role, capsid protein 1, together with capsid proteins 2 and 3, form an icosahedral capsid protecting the viral RNA genome. The icosahedral capsid has a pseudo-T=3 symmetry with a diameter of approximately 300 Angstroms, and is composed of 60 copies of each CP1, CP2, and CP3. CP1 is situated at the 12 fivefold axes, whereas CP2 and CP3 are located at the quasi-sixfold axes. All these proteins contain a beta-sheet structure called beta-barrel jelly roll. Capsid protein 4 is a tstructural component of the icosahedral capsid protecting the genomic RNA. It may play an important role in capsid assembly. Its function is as follows. Capsid protein 2, together with capsid proteins 1 and 3, form an icosahedral capsid protecting the viral RNA genome. The icosahedral capsid has a pseudo-T=3 symmetry with a diameter of approximately 300 Angstroms, and is composed of 60 copies of each CP1, CP2, and CP3. CP1 is situated at the 12 fivefold axes, whereas CP2 and CP3 are located at the quasi-sixfold axes. All these proteins contain a beta-sheet structure called beta-barrel jelly roll. Functionally, capsid protein 3, together with capsid proteins 1 and 2, form an icosahedral capsid protecting the viral RNA genome. The icosahedral capsid has a pseudo-T=3 symmetry with a diameter of approximately 300 Angstroms, and is composed of 60 copies of each CP1, CP2, and CP3. CP1 is situated at the 12 fivefold axes, whereas CP2 and CP3 are located at the quasi-sixfold axes. All these proteins contain a beta-sheet structure called beta-barrel jelly roll. The sequence is that of Structural polyprotein from Cricket paralysis virus (isolate Teleogryllus commodus/Australia/CrPVVIC/1968) (CrPV).